The following is a 214-amino-acid chain: Thymidylate kinase (214 aa).

12 to 19 lines the ATP pocket; that stretch reads GGEGAGKS.

This sequence belongs to the thymidylate kinase family.

It carries out the reaction dTMP + ATP = dTDP + ADP. Its function is as follows. Phosphorylation of dTMP to form dTDP in both de novo and salvage pathways of dTTP synthesis. The protein is Thymidylate kinase of Gluconobacter oxydans (strain 621H) (Gluconobacter suboxydans).